Reading from the N-terminus, the 354-residue chain is Uroporphyrinogen decarboxylase (354 aa).

Substrate is bound by residues 27–31, Asp77, Tyr154, Ser209, and His327; that span reads RQAGR.

Belongs to the uroporphyrinogen decarboxylase family. In terms of assembly, homodimer.

The protein resides in the cytoplasm. The catalysed reaction is uroporphyrinogen III + 4 H(+) = coproporphyrinogen III + 4 CO2. Its pathway is porphyrin-containing compound metabolism; protoporphyrin-IX biosynthesis; coproporphyrinogen-III from 5-aminolevulinate: step 4/4. Functionally, catalyzes the decarboxylation of four acetate groups of uroporphyrinogen-III to yield coproporphyrinogen-III. This chain is Uroporphyrinogen decarboxylase, found in Shewanella halifaxensis (strain HAW-EB4).